A 330-amino-acid chain; its full sequence is UDP-glucose 4-epimerase (330 aa).

Residues 11-12 (YI), 31-36 (DALYTG), 51-52 (DI), 73-77 (FAAYS), Asn-92, Ser-117, Tyr-141, Lys-145, and Phe-169 contribute to the NAD(+) site. Positions 117 and 141 each coordinate substrate. Tyr-141 functions as the Proton acceptor in the catalytic mechanism. Residues Asn-170, 189–190 (HL), 206–208 (TIF), Arg-221, and 282–285 (RGGD) contribute to the substrate site.

This sequence belongs to the NAD(P)-dependent epimerase/dehydratase family. As to quaternary structure, homodimer. NAD(+) is required as a cofactor.

The enzyme catalyses UDP-alpha-D-glucose = UDP-alpha-D-galactose. The protein operates within carbohydrate metabolism; galactose metabolism. Involved in the metabolism of galactose. Catalyzes the conversion of UDP-galactose (UDP-Gal) to UDP-glucose (UDP-Glc) through a mechanism involving the transient reduction of NAD. It also could be involved in preparation of carbohydrate residues for incorporation into complex polymers, such as exopolysaccharides. This chain is UDP-glucose 4-epimerase (galE), found in Lactobacillus helveticus (Lactobacillus suntoryeus).